The primary structure comprises 1966 residues: Probable serine/threonine-protein kinase vps15 (1966 aa).

Residues 21 to 303 (IVFKKSLGNA…QYFSFAHQFI (283 aa)) form the Protein kinase domain. ATP-binding positions include 27–35 (LGNARFLKT) and Lys49. Residue Asp144 is the Proton acceptor of the active site. Residues 362–407 (PILISNNNNNNNNNNNNNNNNNNNNNNNNNNNNNNNNNQTTTTTTN) are disordered. The span at 367-407 (NNNNNNNNNNNNNNNNNNNNNNNNNNNNNNNNNQTTTTTTN) shows a compositional bias: low complexity. HEAT repeat units follow at residues 558–596 (CRLQKIVPYIMSMISPEQPTLVRVEALRSLAKVLEMVQT), 604–642 (IFGQYILPSLSQLSHESTDEIIRIAFAEILPQLATTAKR), 717–754 (KTNESVLPLIITFLNDRDWQLRCAFFENIVAVCTVVGA), and 756–793 (SLESFIYPCILLALTDEEEFVTEKALSSLSELCSLGLL). Disordered regions lie at residues 916–937 (SFNSNGSGGGGNPNLVSSTGGS), 1036–1062 (SSSNNSNNNTLSSSTTSSNSTTPTNST), 1106–1130 (GGITTGGTTTTTLGRSSSPQLTGLN), and 1190–1263 (TSLS…NNMN). 2 stretches are compositionally biased toward low complexity: residues 1106–1119 (GGITTGGTTTTTLG) and 1192–1263 (LSNS…NNMN). WD repeat units lie at residues 1460 to 1499 (EHKAAVNEIQVSSDNLFFATASNDGTVKIWDCQRMEKSVT), 1508 to 1547 (QQEGRITSISICEKTHSIASASDKGSIHVFRVGISGKQKN), 1564 to 1605 (TTRG…DAFN), and 1610 to 1649 (ASLGLIQAFLIDPNRNWLVTGTSRGFLTCWDLRFGIPLYS). The segment at 1699–1743 (RSYEQPPQQQPQQPQPPQQQQQQQSQMNRSINMTSSTTTTTTSSY) is disordered. Composition is skewed to low complexity over residues 1703 to 1722 (QPPQQQPQQPQPPQQQQQQQ) and 1732 to 1742 (TSSTTTTTTSS). WD repeat units lie at residues 1790–1829 (KPTPLVRALLNPPNCPFLITAGDDKRIKLWDWNNLPQSYY) and 1935–1966 (HHQEPILDIKMMEVPNPMLISASTDGVVKVWK).

It belongs to the protein kinase superfamily. Ser/Thr protein kinase family.

It catalyses the reaction L-seryl-[protein] + ATP = O-phospho-L-seryl-[protein] + ADP + H(+). The enzyme catalyses L-threonyl-[protein] + ATP = O-phospho-L-threonyl-[protein] + ADP + H(+). This is Probable serine/threonine-protein kinase vps15 (vps15) from Dictyostelium discoideum (Social amoeba).